Consider the following 67-residue polypeptide: ATP synthase F(0) complex subunit 8 (67 aa).

A helical transmembrane segment spans residues 8 to 24; the sequence is PWFITILSMIITLFILF. The residue at position 54 (K54) is an N6-acetyllysine; alternate. N6-succinyllysine; alternate is present on K54. K57 is modified (N6-acetyllysine).

It belongs to the ATPase protein 8 family. In terms of assembly, component of the ATP synthase complex composed at least of ATP5F1A/subunit alpha, ATP5F1B/subunit beta, ATP5MC1/subunit c (homooctomer), MT-ATP6/subunit a, MT-ATP8/subunit 8, ATP5ME/subunit e, ATP5MF/subunit f, ATP5MG/subunit g, ATP5MK/subunit k, ATP5MJ/subunit j, ATP5F1C/subunit gamma, ATP5F1D/subunit delta, ATP5F1E/subunit epsilon, ATP5PF/subunit F6, ATP5PB/subunit b, ATP5PD/subunit d, ATP5PO/subunit OSCP. ATP synthase complex consists of a soluble F(1) head domain (subunits alpha(3) and beta(3)) - the catalytic core - and a membrane F(0) domain - the membrane proton channel (subunits c, a, 8, e, f, g, k and j). These two domains are linked by a central stalk (subunits gamma, delta, and epsilon) rotating inside the F1 region and a stationary peripheral stalk (subunits F6, b, d, and OSCP). Interacts with PRICKLE3.

The protein localises to the mitochondrion membrane. In terms of biological role, subunit 8, of the mitochondrial membrane ATP synthase complex (F(1)F(0) ATP synthase or Complex V) that produces ATP from ADP in the presence of a proton gradient across the membrane which is generated by electron transport complexes of the respiratory chain. ATP synthase complex consist of a soluble F(1) head domain - the catalytic core - and a membrane F(1) domain - the membrane proton channel. These two domains are linked by a central stalk rotating inside the F(1) region and a stationary peripheral stalk. During catalysis, ATP synthesis in the catalytic domain of F(1) is coupled via a rotary mechanism of the central stalk subunits to proton translocation. In vivo, can only synthesize ATP although its ATP hydrolase activity can be activated artificially in vitro. Part of the complex F(0) domain. The polypeptide is ATP synthase F(0) complex subunit 8 (Orycteropus afer (Aardvark)).